A 593-amino-acid chain; its full sequence is Adenine deaminase 2 (593 aa).

It belongs to the metallo-dependent hydrolases superfamily. Adenine deaminase family. The cofactor is Mn(2+).

The enzyme catalyses adenine + H2O + H(+) = hypoxanthine + NH4(+). This is Adenine deaminase 2 from Rhizobium meliloti (strain 1021) (Ensifer meliloti).